The primary structure comprises 736 residues: Cytosolic neutral trehalase (736 aa).

The interval 1-47 is disordered; it reads MSEAPQARRVGSVDDHSVYDDAKTYYTSEERHNNSRSGPRQRTYSQN. Basic and acidic residues predominate over residues 11–33; the sequence is GSVDDHSVYDDAKTYYTSEERHN. Over residues 35 to 47 the composition is skewed to polar residues; the sequence is SRSGPRQRTYSQN. Asp-92, Asp-94, Asn-96, Gln-98, and Asp-103 together coordinate Ca(2+). Substrate-binding positions include Arg-279, 286–287, Asn-323, 332–334, Glu-399, Arg-448, and Gly-451; these read WD and RSQ. Catalysis depends on proton donor/acceptor residues Asp-453 and Glu-657.

This sequence belongs to the glycosyl hydrolase 37 family. The cofactor is Ca(2+).

Its subcellular location is the cytoplasm. It carries out the reaction alpha,alpha-trehalose + H2O = alpha-D-glucose + beta-D-glucose. Its pathway is carbohydrate degradation. Functionally, hydrolyzes intracellular trehalose to glucose. Plays a role in pathogenicity, specifically in proliferation of invasive hyphae in rice blast disease. This is Cytosolic neutral trehalase (NTH1) from Pyricularia oryzae (strain 70-15 / ATCC MYA-4617 / FGSC 8958) (Rice blast fungus).